A 204-amino-acid polypeptide reads, in one-letter code: N-(5'-phosphoribosyl)anthranilate isomerase (204 aa).

This sequence belongs to the TrpF family.

The enzyme catalyses N-(5-phospho-beta-D-ribosyl)anthranilate = 1-(2-carboxyphenylamino)-1-deoxy-D-ribulose 5-phosphate. It participates in amino-acid biosynthesis; L-tryptophan biosynthesis; L-tryptophan from chorismate: step 3/5. The protein is N-(5'-phosphoribosyl)anthranilate isomerase of Pseudomonas fluorescens (strain Pf0-1).